The sequence spans 299 residues: MIKETDLENIPDLLIKFNEPLSNYTYTKVGGPADILAFPATIEALTELSAKAKATDTPVTVLGNASNLIVRDGGIRGLVILLEKLDSVKVAGYTIEAQAGAKLKEVTQVAQANSLTGFEFACGIPGSIGGAVFMNAGAYGGEISQVLVSCKVMDAEGNVSVLSASEMQFGYRHSVIRDKNLIVLSAKFELQAGDPTQIQNEMDRLNFLRESKQPLEYPSCGSVFKRPVGHFAGQLIQEAKLQGQRIGGVEVSKKHAGFMVNVADGNATDYEKLIALVIEKVKENSGVTLEPEVRIIGEK.

One can recognise an FAD-binding PCMH-type domain in the interval 28–193 (KVGGPADILA…LSAKFELQAG (166 aa)). Arg-172 is a catalytic residue. Ser-222 acts as the Proton donor in catalysis. Glu-292 is a catalytic residue.

It depends on FAD as a cofactor.

It localises to the cytoplasm. It catalyses the reaction UDP-N-acetyl-alpha-D-muramate + NADP(+) = UDP-N-acetyl-3-O-(1-carboxyvinyl)-alpha-D-glucosamine + NADPH + H(+). The protein operates within cell wall biogenesis; peptidoglycan biosynthesis. Cell wall formation. The polypeptide is UDP-N-acetylenolpyruvoylglucosamine reductase (Lactococcus lactis subsp. cremoris (strain MG1363)).